A 526-amino-acid polypeptide reads, in one-letter code: CTP synthase (526 aa).

Positions 1–264 (MPQRFIVVTG…HKLIAKELDI (264 aa)) are amidoligase domain. Serine 14 lines the CTP pocket. Serine 14 lines the UTP pocket. Residues 15 to 20 (GIGKGI) and aspartate 72 contribute to the ATP site. Mg(2+) contacts are provided by aspartate 72 and glutamate 138. Residues 145–147 (DIE), 185–190 (KTKPTQ), and lysine 221 contribute to the CTP site. UTP-binding positions include 185–190 (KTKPTQ) and lysine 221. Residues 282 to 526 (KIGIVGKYLG…VKAAGGKIND (245 aa)) enclose the Glutamine amidotransferase type-1 domain. Residue glycine 342 coordinates L-glutamine. Catalysis depends on cysteine 369, which acts as the Nucleophile; for glutamine hydrolysis. L-glutamine contacts are provided by residues 370-373 (LGMQ), glutamate 393, and arginine 451. Active-site residues include histidine 499 and glutamate 501.

The protein belongs to the CTP synthase family. In terms of assembly, homotetramer.

It carries out the reaction UTP + L-glutamine + ATP + H2O = CTP + L-glutamate + ADP + phosphate + 2 H(+). The catalysed reaction is L-glutamine + H2O = L-glutamate + NH4(+). The enzyme catalyses UTP + NH4(+) + ATP = CTP + ADP + phosphate + 2 H(+). It functions in the pathway pyrimidine metabolism; CTP biosynthesis via de novo pathway; CTP from UDP: step 2/2. Its activity is regulated as follows. Allosterically activated by GTP, when glutamine is the substrate; GTP has no effect on the reaction when ammonia is the substrate. The allosteric effector GTP functions by stabilizing the protein conformation that binds the tetrahedral intermediate(s) formed during glutamine hydrolysis. Inhibited by the product CTP, via allosteric rather than competitive inhibition. Its function is as follows. Catalyzes the ATP-dependent amination of UTP to CTP with either L-glutamine or ammonia as the source of nitrogen. Regulates intracellular CTP levels through interactions with the four ribonucleotide triphosphates. The polypeptide is CTP synthase (Thermosipho africanus (strain TCF52B)).